The primary structure comprises 444 residues: Radical S-adenosyl methionine domain-containing protein 1, mitochondrial (444 aa).

Residues 1–39 (MSTRVLTLTLLKKRHLMQCFWSTVGSVHLRSIASDKIPS) constitute a mitochondrion transit peptide. The Radical SAM core domain occupies 40-274 (HAVEASLYVH…CRVLEESGFH (235 aa)). An S-adenosyl-L-methionine-binding site is contributed by tyrosine 47. [4Fe-4S] cluster contacts are provided by cysteine 53, cysteine 57, and cysteine 60. S-adenosyl-L-methionine-binding positions include glycine 102, 103-104 (GT), glutamate 135, glutamine 162, arginine 174, and aspartate 199.

Belongs to the anaerobic coproporphyrinogen-III oxidase family. HemW subfamily. The cofactor is [4Fe-4S] cluster.

The protein resides in the mitochondrion. May be a heme chaperone, appears to bind heme. Homologous bacterial proteins do not have oxygen-independent coproporphyrinogen-III oxidase activity. Binds 1 [4Fe-4S] cluster. The cluster is coordinated with 3 cysteines and an exchangeable S-adenosyl-L-methionine. The chain is Radical S-adenosyl methionine domain-containing protein 1, mitochondrial (rsad1) from Danio rerio (Zebrafish).